Consider the following 81-residue polypeptide: Small cysteine-rich protein 6 (81 aa).

The first 23 residues, 1-23 (MDTKVACLLLIILGALTVQGAVS), serve as a signal peptide directing secretion. Positions 24–25 (GN) are excised as a propeptide.

This sequence belongs to the Cnidaria small cysteine-rich protein (SCRiP) family. beta subfamily. In terms of processing, contains 4 disulfide bonds.

The protein localises to the secreted. It is found in the nematocyst. In terms of biological role, induces neurotoxic symptoms on zebrafish. Has also been claimed to be implied in calcification, but tests on homolog proteins suggest that proteins of this family have a neurotoxic function and not a calcification function. This is Small cysteine-rich protein 6 from Orbicella faveolata (Mountainous star coral).